The following is a 231-amino-acid chain: Extracellular deoxyribonuclease (231 aa).

An N-terminal signal peptide occupies residues 1–20 (MMIFRFVTTLAASLPLLTFA).

This sequence belongs to the EndA/NucM nuclease family.

It is found in the secreted. The sequence is that of Extracellular deoxyribonuclease (dns) from Vibrio cholerae serotype O1 (strain ATCC 39315 / El Tor Inaba N16961).